Here is a 194-residue protein sequence, read N- to C-terminus: Glycerol-3-phosphate acyltransferase (194 aa).

The next 5 membrane-spanning stretches (helical) occupy residues 3–23 (IALL…LIVG), 47–67 (VLGK…GVLP), 78–97 (IHGI…PIYL), 112–132 (ILGV…TLLF), and 153–173 (LFFD…LIII).

Belongs to the PlsY family. In terms of assembly, probably interacts with PlsX.

It is found in the cell membrane. It carries out the reaction an acyl phosphate + sn-glycerol 3-phosphate = a 1-acyl-sn-glycero-3-phosphate + phosphate. The protein operates within lipid metabolism; phospholipid metabolism. Its function is as follows. Catalyzes the transfer of an acyl group from acyl-phosphate (acyl-PO(4)) to glycerol-3-phosphate (G3P) to form lysophosphatidic acid (LPA). This enzyme utilizes acyl-phosphate as fatty acyl donor, but not acyl-CoA or acyl-ACP. This is Glycerol-3-phosphate acyltransferase from Macrococcus caseolyticus (strain JCSC5402) (Macrococcoides caseolyticum).